The chain runs to 303 residues: Elongation factor Ts (303 aa).

An involved in Mg(2+) ion dislocation from EF-Tu region spans residues 81–84 (TDFV).

The protein belongs to the EF-Ts family.

The protein localises to the cytoplasm. Associates with the EF-Tu.GDP complex and induces the exchange of GDP to GTP. It remains bound to the aminoacyl-tRNA.EF-Tu.GTP complex up to the GTP hydrolysis stage on the ribosome. This chain is Elongation factor Ts, found in Mesomycoplasma hyopneumoniae (strain 7448) (Mycoplasma hyopneumoniae).